The primary structure comprises 225 residues: Nuclear autoantigen Sp-100 (225 aa).

Residues 1–25 enclose the SAND domain; sequence SKNWKLSIRCGGYTLKVLMENKLLP. 2 DNA-binding regions (HMG box) span residues 26–102 and 118–186; these read EPPS…KTYI and PKRP…AAYR. The short motif at 66-83 is the Nuclear localization signal element; sequence KKCSEMWKTIFAKEKGKF. Residues 157-224 adopt a coiled-coil conformation; the sequence is NNTAAADKQF…EDEQEEENEE (68 aa). The interval 185–225 is disordered; that stretch reads YRAKGMPNSAKKRAVKAEKSKKKREEEEDEEDEQEEENEEE. The segment covering 194-206 has biased composition (basic residues); sequence AKKRAVKAEKSKK. The segment covering 210 to 225 has biased composition (acidic residues); it reads EEEDEEDEQEEENEEE.

In terms of assembly, homodimer. Interacts with members of the HP1 family of nonhistone chromosomal protein, such as CBX5 and CBX3 via the PxVxL motif. Interacts with ETS1; the interaction is direct and modulates ETS1 transcriptional activity. Interacts with the MRN complex which is composed of two heterodimers RAD50/MRE11 associated with a single NBN; recruits the complex to PML-related bodies. Interacts with HIPK2; positively regulates TP53-dependent transcription. Interacts with CASP8AP2; may negatively regulate CASP8AP2 export from the nucleus to the cytoplasm. Post-translationally, sumoylated. Sumoylated with SUMO1. Sumoylation depends on a functional nuclear localization signal but is not necessary for nuclear import or nuclear body targeting. Sumoylation may stabilize the interaction with CBX5. In terms of processing, phosphorylated.

The protein localises to the nucleus. It localises to the PML body. Its subcellular location is the nuclear body. It is found in the cytoplasm. Its function is as follows. Together with PML, this tumor suppressor is a major constituent of the PML bodies, a subnuclear organelle involved in a large number of physiological processes including cell growth, differentiation and apoptosis. Functions as a transcriptional coactivator of ETS1 and ETS2. Under certain conditions, it may also act as a corepressor of ETS1 preventing its binding to DNA. Through the regulation of ETS1 it may play a role in angiogenesis, controlling endothelial cell motility and invasion. Through interaction with the MRN complex it may be involved in the regulation of telomeres lengthening. May also regulate TP53-mediated transcription and through CASP8AP2, regulate FAS-mediated apoptosis. May also play a role in infection by viruses through mechanisms that may involve chromatin and/or transcriptional regulation. In Gorilla gorilla gorilla (Western lowland gorilla), this protein is Nuclear autoantigen Sp-100 (SP100).